We begin with the raw amino-acid sequence, 191 residues long: Protein Ves (191 aa).

The protein belongs to the Ves family.

The protein is Protein Ves of Escherichia coli O127:H6 (strain E2348/69 / EPEC).